The sequence spans 595 residues: E3 ubiquitin-protein ligase synoviolin B (595 aa).

Residues 1–19 (MTGASLALTASVVAHAYYL) form a helical membrane-spanning segment. Over 20 to 35 (KNQFYPTVVYLTKSSP) the chain is Lumenal. The helical transmembrane segment at 36-56 (SMAILYIQAFVLVFLLGKFMG) threads the bilayer. At 57 to 92 (KVFFGQLRAAEMEHLLERSWYAVTETCLAFTVFRDD) the chain is on the cytoplasmic side. A helical transmembrane segment spans residues 93–113 (FSPRFVALFTLLLFLKCFHWL). Topologically, residues 114–129 (AEDRVDFMERSPNISW) are lumenal. A helical transmembrane segment spans residues 130–150 (LFHFRILALMLLLGVLDAFFV). At 151–163 (SHAYNSLVTRGAS) the chain is on the cytoplasmic side. Residues 164 to 184 (VQLVFGFEYAILMTMILAVFI) traverse the membrane as a helical segment. Residues 185–218 (KYILHSVDLQSENPWDNKAVYMLYTELFTGFIKV) lie on the Lumenal side of the membrane. Residues 219-239 (LLYMAFMTIMVKVHTFPLFAI) form a helical membrane-spanning segment. The interaction with p53/TP53 stretch occupies residues 230–264 (KVHTFPLFAIRPMYLAMRQFKKAVTDAVMSRRAIR). At 240 to 595 (RPMYLAMRQF…LQKLETTDSQ (356 aa)) the chain is on the cytoplasmic side. Positions 285, 288, 301, 303, 306, 309, 320, and 323 each coordinate Zn(2+). The RING-type; atypical zinc finger occupies 285-324 (CIICREEMVSGAKRLPCNHIFHTSCLRSWFQRQQTCPTCR). Residues 335-353 (QPQTPAEQQNQHQAQQQPT) are compositionally biased toward low complexity. Disordered stretches follow at residues 335 to 370 (QPQTPAEQQNQHQAQQQPTPVVPPQPNFPPGMLPPF) and 386 to 426 (PVPG…PGAA). Positions 354-370 (PVVPPQPNFPPGMLPPF) are enriched in pro residues. Residues 390–408 (APVGNPPDEANPGSSSGSS) show a composition bias toward low complexity. Residues 463-494 (EELRAMEGHERQNLEARLQCLQNIHTLLDAAM) are a coiled coil. Positions 509 to 595 (PPQPPVSSSS…LQKLETTDSQ (87 aa)) are disordered. Residues 514-552 (VSSSSSSSASASTEPTTSSVSEPVIDTSSIVTTDSSQQS) are compositionally biased toward low complexity.

Belongs to the HRD1 family. As to quaternary structure, homodimer.

It is found in the endoplasmic reticulum membrane. The enzyme catalyses S-ubiquitinyl-[E2 ubiquitin-conjugating enzyme]-L-cysteine + [acceptor protein]-L-lysine = [E2 ubiquitin-conjugating enzyme]-L-cysteine + N(6)-ubiquitinyl-[acceptor protein]-L-lysine.. The protein operates within protein modification; protein ubiquitination. E3 ubiquitin-protein ligase which accepts ubiquitin specifically from endoplasmic reticulum-associated UBC7 E2 ligase and transfers it to substrates, promoting their degradation. Component of the endoplasmic reticulum quality control (ERQC) system also called ER-associated degradation (ERAD) involved in ubiquitin-dependent degradation of misfolded endoplasmic reticulum proteins. Also promotes the degradation of normal but naturally short-lived proteins. Protects cells from ER stress-induced apoptosis. Sequesters p53 in the cytoplasm and promotes its degradation, thereby negatively regulating its biological function in transcription, cell cycle regulation and apoptosis. This Xenopus laevis (African clawed frog) protein is E3 ubiquitin-protein ligase synoviolin B (syvn1-b).